The sequence spans 79 residues: MSTKKSPEELKRIFEKYAAKEGDPDQLSKDELKLLIQAEFPSLLKGPNTLDDLFQELDKNGDGEVSFEEFQVLVKKISQ.

S2 carries the N-acetylserine modification. EF-hand domains are found at residues 13–48 (IFEK…KGPN) and 45–79 (KGPN…KISQ). 2 residues coordinate Ca(2+): Q26 and E31. Residue S42 is modified to Phosphoserine. Positions 58, 60, 62, 64, and 69 each coordinate Ca(2+).

Belongs to the S-100 family.

The chain is Protein S100-G (S100G) from Homo sapiens (Human).